The following is a 351-amino-acid chain: Methionine import ATP-binding protein MetN (351 aa).

An ABC transporter domain is found at 2 to 238; it reads IKLNHINKTY…PKHPITRELI (237 aa). 35 to 42 contributes to the ATP binding site; sequence GYSGAGKS.

This sequence belongs to the ABC transporter superfamily. Methionine importer (TC 3.A.1.24) family. In terms of assembly, the complex is composed of two ATP-binding proteins (MetN), two transmembrane proteins (MetI) and a solute-binding protein (MetQ).

Its subcellular location is the cell inner membrane. It catalyses the reaction L-methionine(out) + ATP + H2O = L-methionine(in) + ADP + phosphate + H(+). The enzyme catalyses D-methionine(out) + ATP + H2O = D-methionine(in) + ADP + phosphate + H(+). Its function is as follows. Part of the ABC transporter complex MetNIQ involved in methionine import. Responsible for energy coupling to the transport system. The protein is Methionine import ATP-binding protein MetN of Helicobacter hepaticus (strain ATCC 51449 / 3B1).